The sequence spans 540 residues: Peptide chain release factor 3 (540 aa).

In terms of domain architecture, tr-type G spans 14–283 (ELRRNFAIIS…YFLNYALKPG (270 aa)). GTP-binding positions include 23–30 (SHPDAGKT), 91–95 (DTPGH), and 145–148 (NKLD).

The protein belongs to the TRAFAC class translation factor GTPase superfamily. Classic translation factor GTPase family. PrfC subfamily.

Its subcellular location is the cytoplasm. Increases the formation of ribosomal termination complexes and stimulates activities of RF-1 and RF-2. It binds guanine nucleotides and has strong preference for UGA stop codons. It may interact directly with the ribosome. The stimulation of RF-1 and RF-2 is significantly reduced by GTP and GDP, but not by GMP. In Trichormus variabilis (strain ATCC 29413 / PCC 7937) (Anabaena variabilis), this protein is Peptide chain release factor 3.